Consider the following 183-residue polypeptide: Nodulation protein L (183 aa).

Belongs to the transferase hexapeptide repeat family.

Its function is as follows. Acetyltransferase implicated in the O-acetylation of Nod factors. The chain is Nodulation protein L (nodL) from Rhizobium meliloti (strain 1021) (Ensifer meliloti).